The following is a 149-amino-acid chain: MKTARRRAREFAVQGIYEWELNPDRPASLIEKHLRENEYFAKADEALFRSILYGVLKDVELLSAQVGRYYERAEDEVSPVERAVLLMAALELTQSPETPYPVIINEAIEITKTFGGTDGHKFVNGVLDKLAAEVRGDEVLAQKQRRKQD.

This sequence belongs to the NusB family.

Functionally, involved in transcription antitermination. Required for transcription of ribosomal RNA (rRNA) genes. Binds specifically to the boxA antiterminator sequence of the ribosomal RNA (rrn) operons. The sequence is that of Transcription antitermination protein NusB from Chromobacterium violaceum (strain ATCC 12472 / DSM 30191 / JCM 1249 / CCUG 213 / NBRC 12614 / NCIMB 9131 / NCTC 9757 / MK).